Consider the following 123-residue polypeptide: 1,4-dihydroxy-2-naphthoyl-CoA hydrolase (123 aa).

The active-site Nucleophile or proton acceptor is E46.

Belongs to the thioesterase PaaI family.

The enzyme catalyses 1,4-dihydroxy-2-naphthoyl-CoA + H2O = 1,4-dihydroxy-2-naphthoate + CoA + H(+). Its pathway is quinol/quinone metabolism; menaquinone biosynthesis. Functionally, catalyzes the hydrolysis of 1,4-dihydroxy-2-naphthoyl-CoA (DHNA-CoA) to 1,4-dihydroxy-2-naphthoate (DHNA) and free coenzyme A. Production of DHNA is required for protection against bacteriolysis in the cytosol of macrophages and tissue-specific virulence in vivo, suggesting that MenI is required to protect the bacteria from killing in the macrophage cytosol. The sequence is that of 1,4-dihydroxy-2-naphthoyl-CoA hydrolase from Listeria monocytogenes serotype 1/2a (strain 10403S).